We begin with the raw amino-acid sequence, 170 residues long: Ribosome maturation factor RimM (170 aa).

The PRC barrel domain occupies 98-170 (PDEYYWVDLE…LIVVDWDPDF (73 aa)).

The protein belongs to the RimM family. As to quaternary structure, binds ribosomal protein uS19.

It is found in the cytoplasm. Functionally, an accessory protein needed during the final step in the assembly of 30S ribosomal subunit, possibly for assembly of the head region. Essential for efficient processing of 16S rRNA. May be needed both before and after RbfA during the maturation of 16S rRNA. It has affinity for free ribosomal 30S subunits but not for 70S ribosomes. In Xanthomonas axonopodis pv. citri (strain 306), this protein is Ribosome maturation factor RimM.